A 402-amino-acid polypeptide reads, in one-letter code: S-adenosylmethionine synthase (402 aa).

Residue 137 to 142 (GQGSAD) coordinates ATP.

Belongs to the AdoMet synthase 2 family. Requires Mg(2+) as cofactor.

The catalysed reaction is L-methionine + ATP + H2O = S-adenosyl-L-methionine + phosphate + diphosphate. Its pathway is amino-acid biosynthesis; S-adenosyl-L-methionine biosynthesis; S-adenosyl-L-methionine from L-methionine: step 1/1. Its function is as follows. Catalyzes the formation of S-adenosylmethionine from methionine and ATP. The polypeptide is S-adenosylmethionine synthase (Pyrobaculum neutrophilum (strain DSM 2338 / JCM 9278 / NBRC 100436 / V24Sta) (Thermoproteus neutrophilus)).